The primary structure comprises 246 residues: Probable chemoreceptor glutamine deamidase CheD (246 aa).

Positions 225–246 (GAGVQPAVQKAASPYAANLSRK) are disordered.

Belongs to the CheD family.

The enzyme catalyses L-glutaminyl-[protein] + H2O = L-glutamyl-[protein] + NH4(+). Its function is as follows. Probably deamidates glutamine residues to glutamate on methyl-accepting chemotaxis receptors (MCPs), playing an important role in chemotaxis. The sequence is that of Probable chemoreceptor glutamine deamidase CheD from Burkholderia vietnamiensis (strain G4 / LMG 22486) (Burkholderia cepacia (strain R1808)).